The primary structure comprises 479 residues: POU domain, class 2, transcription factor 2 (479 aa).

Disordered regions lie at residues 1–86 (MVHS…AQPH), 166–200 (TQAVTRPTLPDPHLSHPQPPKCLEPPSHPEEPSDL), 275–298 (SSLPSPNQLSSPSLGFDGLPGRRR), 357–393 (PCSAAPMLPSPGKPASYSPHMVTPQGGAGTLPLSQAS), and 409–479 (TLHP…PYQP). Residues 12–37 (RMSKPLEAEKQGLDSPSEHTDTERNG) are compositionally biased toward basic and acidic residues. Residues 38–60 (PDTNHQNPQNKTSPFSVSPTGPS) are compositionally biased toward polar residues. The span at 76 to 85 (APLPPQPAQP) shows a compositional bias: pro residues. The POU-specific domain maps to 195–269 (EEPSDLEELE…LLEKWLNDAE (75 aa)). Low complexity predominate over residues 275 to 288 (SSLPSPNQLSSPSL). The homeobox DNA-binding region spans 297–356 (RRKKRTSIETNVRFALEKSFLANQKPTSEEILLIAEQLHMEKEVIRVWFCNRRQKEKRIN). The segment at 389 to 410 (LSQASSSLSTTVTTLSSAVGTL) is leucine-zipper. Positions 416-425 (AGGGGGGGGA) are enriched in gly residues.

The protein belongs to the POU transcription factor family. Class-2 subfamily. In terms of assembly, interacts with NR3C1, AR and PGR. Interacts with POU2AF1; the interaction increases POU2F2 transactivation activity. In terms of tissue distribution, isoform 3 is B-cell specific. Isoform 5 is expressed in B-cells and the immunoglobulin-expressing T-cell line MOLT-4, but not in the T-cell line BW5147.

The protein resides in the cytoplasm. Its subcellular location is the nucleus. Transactivation activity is enhanced by transcriptional coactivator POU2AF1. Functionally, transcription factor that specifically binds to the octamer motif (5'-ATTTGCAT-3'). Regulates IL6 expression in B cells with POU2AF1. Regulates transcription in a number of tissues in addition to activating immunoglobulin gene expression. Modulates transcription transactivation by NR3C1, AR and PGR. Activates the U2 small nuclear RNA (snRNA) promoter. In Homo sapiens (Human), this protein is POU domain, class 2, transcription factor 2.